The primary structure comprises 464 residues: Protein VAPYRIN-LIKE (464 aa).

The region spanning 3 to 124 (RLVKTEFNEV…RDAVITVILV (122 aa)) is the MSP domain. ANK repeat units lie at residues 153 to 182 (NLTNLMKPAVESGKVEYVTDLITAGGDVNF), 186 to 215 (NGKSLIPFAIRTGKLAVLKLLVANGCRIND), 217 to 246 (VDFVLHEAAIIDRVDVVKFLFESFCDELDV), 252 to 281 (EMMTPIHVSASEGHVSLIEFFVSIGGNANA), 285 to 314 (RRWTPLHHAASRNHLKAVEFLLENSDVKYA), 318 to 347 (NGKTAFEIASESGHTRLFGVLRWGDALLQA), 349 to 368 (RVDDVHALKKCLGEGAEVNR), 372 to 401 (NGWTPLHWASFKGRIKSVKVLLEHGAEVDS), and 405 to 435 (AGYTPLHCAAEAGHLQVALVLIAHGGCQTNL).

Expressed in roots.

The protein resides in the cytoplasm. The protein localises to the nucleus. Its subcellular location is the cell membrane. In terms of biological role, may be involved in arbuscular mycorrhizal (AM) symbiosis with AM fungi and in nitrogen-fixing rhizobial bacteria symbiosis leading to the formation of root nodules. This chain is Protein VAPYRIN-LIKE, found in Medicago truncatula (Barrel medic).